Here is a 95-residue protein sequence, read N- to C-terminus: Small ribosomal subunit protein bS16 (95 aa).

The protein belongs to the bacterial ribosomal protein bS16 family.

The sequence is that of Small ribosomal subunit protein bS16 from Streptococcus pneumoniae (strain CGSP14).